A 104-amino-acid chain; its full sequence is Large ribosomal subunit protein uL24 (104 aa).

The protein belongs to the universal ribosomal protein uL24 family. In terms of assembly, part of the 50S ribosomal subunit.

In terms of biological role, one of two assembly initiator proteins, it binds directly to the 5'-end of the 23S rRNA, where it nucleates assembly of the 50S subunit. Functionally, one of the proteins that surrounds the polypeptide exit tunnel on the outside of the subunit. This chain is Large ribosomal subunit protein uL24, found in Pseudomonas fluorescens (strain ATCC BAA-477 / NRRL B-23932 / Pf-5).